The sequence spans 155 residues: uncharacterized protein (155 aa).

This sequence belongs to the IIV-6 145L family.

This is an uncharacterized protein from Acheta domesticus (House cricket).